Here is a 140-residue protein sequence, read N- to C-terminus: Large ribosomal subunit protein bL17 (140 aa).

Belongs to the bacterial ribosomal protein bL17 family. In terms of assembly, part of the 50S ribosomal subunit. Contacts protein L32.

The sequence is that of Large ribosomal subunit protein bL17 from Paracoccus denitrificans (strain Pd 1222).